A 653-amino-acid polypeptide reads, in one-letter code: DNA mismatch repair protein MutL (653 aa).

The tract at residues glutamine 375–serine 425 is disordered. Residues tyrosine 380–aspartate 389 are compositionally biased toward basic and acidic residues.

It belongs to the DNA mismatch repair MutL/HexB family.

Its function is as follows. This protein is involved in the repair of mismatches in DNA. It is required for dam-dependent methyl-directed DNA mismatch repair. May act as a 'molecular matchmaker', a protein that promotes the formation of a stable complex between two or more DNA-binding proteins in an ATP-dependent manner without itself being part of a final effector complex. This Vibrio cholerae serotype O1 (strain ATCC 39541 / Classical Ogawa 395 / O395) protein is DNA mismatch repair protein MutL.